The primary structure comprises 179 residues: Disulfide bond formation protein B (179 aa).

The Cytoplasmic segment spans residues 1–14; sequence MLSYFKELSLNRTA. A helical transmembrane segment spans residues 15-31; it reads WLLLAFVAFALEASAIY. Residues 32 to 49 lie on the Periplasmic side of the membrane; the sequence is FQYGMGLVPCVMCVYERL. An intrachain disulfide couples cysteine 41 to cysteine 44. Residues 50-65 traverse the membrane as a helical segment; the sequence is AIFGLLIAGLVGAISP. The Cytoplasmic portion of the chain corresponds to 66-72; it reads RFFLTRW. A helical transmembrane segment spans residues 73-90; that stretch reads LALLLWGFSAFKGLALAI. Over 91–146 the chain is Periplasmic; that stretch reads KHHDYQANPSPWNQCEFKPEFPQTMPFDQWFPSIFAPGPVNCSEKQWEMFGLGMPE. A disulfide bridge connects residues cysteine 105 and cysteine 132. A helical membrane pass occupies residues 147-165; that stretch reads WLILAFSIFALMFVIVLLS. The Cytoplasmic segment spans residues 166–179; it reads QFKRAKPQYRSVFR.

This sequence belongs to the DsbB family.

Its subcellular location is the cell inner membrane. In terms of biological role, required for disulfide bond formation in some periplasmic proteins. Acts by oxidizing the DsbA protein. This chain is Disulfide bond formation protein B, found in Actinobacillus pleuropneumoniae serotype 5b (strain L20).